The chain runs to 1174 residues: Fanconi anemia group J protein homolog (1174 aa).

Residues 11-445 (GGVKIHFPCR…KSHEPLRDVC (435 aa)) enclose the Helicase ATP-binding domain. The segment covering 101 to 126 (NLDTSPHFNSPSKPSSGRNGVSTPCQ) has biased composition (polar residues). 2 disordered regions span residues 101 to 160 (NLDT…EKKR) and 187 to 208 (LASE…DRKD). Residues 134 to 143 (LAAKLSAKKQ) are compositionally biased toward low complexity. Positions 158 to 175 (KKRIRPLETTQQIRKRHC) match the Nuclear localization signal motif. Residue 185–192 (ARLASEKR) participates in ATP binding. Positions 286, 301, 313, and 353 each coordinate [4Fe-4S] cluster. The short motif at 393-396 (VILD) is the DEAH box element. Residues 888–1063 (SRRHQKVTNR…SNETADTSLG (176 aa)) form an interaction with BRCA1 region. 2 stretches are compositionally biased toward polar residues: residues 923 to 935 (TSVS…SPEN) and 990 to 1001 (SRSSSPTFGKQT). Disordered regions lie at residues 923-1001 (TSVS…GKQT) and 1102-1155 (LSPG…SSHS). Residues serine 929, serine 932, and serine 994 each carry the phosphoserine modification. Residues 1138–1147 (DTNEENGELV) are compositionally biased toward acidic residues. Lysine 1174 is modified (N6-acetyllysine).

It belongs to the DEAD box helicase family. DEAH subfamily. In terms of assembly, binds directly to the BRCT domains of BRCA1. Interacts with the CIA complex components CIAO1, CIAO2B and MMS19. [4Fe-4S] cluster serves as cofactor. In terms of processing, phosphorylated. Phosphorylation is necessary for interaction with BRCA1, and is cell-cycle regulated.

It is found in the nucleus. The protein localises to the cytoplasm. It carries out the reaction Couples ATP hydrolysis with the unwinding of duplex DNA at the replication fork by translocating in the 5'-3' direction. This creates two antiparallel DNA single strands (ssDNA). The leading ssDNA polymer is the template for DNA polymerase III holoenzyme which synthesizes a continuous strand.. It catalyses the reaction ATP + H2O = ADP + phosphate + H(+). Functionally, DNA-dependent helicase and 5' to 3' DNA helicase required for the maintenance of chromosomal stability. Acts late in the Fanconi anemia pathway, after FANCD2 ubiquitination. Involved in the repair of DNA double-strand breaks by homologous recombination in a manner that depends on its association with BRCA1. Involved in the repair of abasic sites at replication forks by promoting the degradation of DNA-protein cross-links: acts by catalyzing unfolding of HMCES DNA-protein cross-link via its helicase activity, exposing the underlying DNA and enabling cleavage of the DNA-protein adduct by the SPRTN metalloprotease. Can unwind RNA:DNA hybrids and G-quadruplex DNA. The protein is Fanconi anemia group J protein homolog of Mus musculus (Mouse).